A 682-amino-acid chain; its full sequence is Tetratricopeptide repeat protein 39B (682 aa).

TPR repeat units lie at residues 393–426 (SLVL…QEEW) and 626–659 (PFTL…YKDY).

The protein belongs to the TTC39 family.

Regulates high density lipoprotein (HDL) cholesterol metabolism by promoting the ubiquitination and degradation of the oxysterols receptors LXR (NR1H2 and NR1H3). The protein is Tetratricopeptide repeat protein 39B of Homo sapiens (Human).